Consider the following 108-residue polypeptide: Integration host factor subunit alpha (108 aa).

It belongs to the bacterial histone-like protein family. Heterodimer of an alpha and a beta chain.

This protein is one of the two subunits of integration host factor, a specific DNA-binding protein that functions in genetic recombination as well as in transcriptional and translational control. This Bartonella henselae (strain ATCC 49882 / DSM 28221 / CCUG 30454 / Houston 1) (Rochalimaea henselae) protein is Integration host factor subunit alpha.